The sequence spans 351 residues: Ferredoxin--NADP reductase (351 aa).

FAD-binding residues include Asp-44, Gln-52, Tyr-57, Ile-97, Phe-132, Asp-296, and Ser-337.

The protein belongs to the ferredoxin--NADP reductase type 2 family. As to quaternary structure, homodimer. FAD is required as a cofactor.

It carries out the reaction 2 reduced [2Fe-2S]-[ferredoxin] + NADP(+) + H(+) = 2 oxidized [2Fe-2S]-[ferredoxin] + NADPH. The sequence is that of Ferredoxin--NADP reductase from Burkholderia vietnamiensis (strain G4 / LMG 22486) (Burkholderia cepacia (strain R1808)).